We begin with the raw amino-acid sequence, 809 residues long: Hydrazine synthase subunit alpha (809 aa).

The signal sequence occupies residues 1 to 27 (MGKRKLGVIASAFVAGALVCGSTLVNA). Residue Cys303 participates in Zn(2+) binding. Heme is bound by residues Cys583 and Cys586. Residue His587 participates in Zn(2+) binding. Residues Tyr591, Cys685, Cys688, His689, and His772 each coordinate heme. Residues 633 to 792 (KGVKHGEDVV…AIVEWIDLGA (160 aa)) enclose the Cytochrome c domain.

In terms of assembly, part of the hydrazine synthase complex that forms an elongated dimer of heterotrimers composed of one alpha, one beta and one gamma subunit. Requires heme c as cofactor.

The protein localises to the anammoxosome. It carries out the reaction hydrazine + 3 Fe(III)-[cytochrome c] + H2O = nitric oxide + 3 Fe(II)-[cytochrome c] + NH4(+) + 2 H(+). Its pathway is nitrogen metabolism. Its function is as follows. Component of the hydrazine synthase complex that catalyzes the condensation of nitric oxide (NO) with ammonium to form hydrazine. The alpha subunit catalyzes the second half-reaction, i.e. the condensation of hydroxylamine formed in the active site of the gamma subunit with ammonia, yielding hydrazine. Is involved in anaerobic ammonium oxidation (anammox), a biological process in which nitrite is used as the electron acceptor in the conversion of ammonium to dinitrogen gas (N2) and water; this bacterial process has a major role in the Earth's nitrogen cycle and has been estimated to synthesize up to 50% of the dinitrogen gas emitted into our atmosphere from the oceans. The polypeptide is Hydrazine synthase subunit alpha (Kuenenia stuttgartiensis).